The primary structure comprises 61 residues: Large ribosomal subunit protein eL37 (61 aa).

Zn(2+) is bound by residues Cys-20, Cys-23, Cys-35, and Cys-38. A C4-type zinc finger spans residues 20–38 (CRRCGRRAYHVRKKRCAAC).

Belongs to the eukaryotic ribosomal protein eL37 family. Requires Zn(2+) as cofactor.

In terms of biological role, binds to the 23S rRNA. The polypeptide is Large ribosomal subunit protein eL37 (rpl37e) (Methanocaldococcus jannaschii (strain ATCC 43067 / DSM 2661 / JAL-1 / JCM 10045 / NBRC 100440) (Methanococcus jannaschii)).